Reading from the N-terminus, the 145-residue chain is Deoxyuridine 5'-triphosphate nucleotidohydrolase (145 aa).

Substrate contacts are provided by residues 64–66, Asn77, 81–83, and Met91; these read RSG and TID.

This sequence belongs to the dUTPase family. It depends on Mg(2+) as a cofactor.

It carries out the reaction dUTP + H2O = dUMP + diphosphate + H(+). It functions in the pathway pyrimidine metabolism; dUMP biosynthesis; dUMP from dCTP (dUTP route): step 2/2. Functionally, this enzyme is involved in nucleotide metabolism: it produces dUMP, the immediate precursor of thymidine nucleotides and it decreases the intracellular concentration of dUTP so that uracil cannot be incorporated into DNA. This chain is Deoxyuridine 5'-triphosphate nucleotidohydrolase, found in Leptospira borgpetersenii serovar Hardjo-bovis (strain JB197).